The primary structure comprises 67 residues: Large ribosomal subunit protein uL29 (67 aa).

Belongs to the universal ribosomal protein uL29 family.

The sequence is that of Large ribosomal subunit protein uL29 from Magnetococcus marinus (strain ATCC BAA-1437 / JCM 17883 / MC-1).